The chain runs to 272 residues: ATP synthase subunit a (272 aa).

5 consecutive transmembrane segments (helical) span residues 41–61, 101–121, 147–167, 212–232, and 243–263; these read TLNI…LVLF, LIAP…LMDL, DVNI…FYSI, LFGN…LLPW, and AIFH…LTIV.

The protein belongs to the ATPase A chain family. As to quaternary structure, F-type ATPases have 2 components, CF(1) - the catalytic core - and CF(0) - the membrane proton channel. CF(1) has five subunits: alpha(3), beta(3), gamma(1), delta(1), epsilon(1). CF(0) has three main subunits: a(1), b(2) and c(9-12). The alpha and beta chains form an alternating ring which encloses part of the gamma chain. CF(1) is attached to CF(0) by a central stalk formed by the gamma and epsilon chains, while a peripheral stalk is formed by the delta and b chains.

The protein localises to the cell inner membrane. In terms of biological role, key component of the proton channel; it plays a direct role in the translocation of protons across the membrane. This is ATP synthase subunit a from Cronobacter sakazakii (strain ATCC BAA-894) (Enterobacter sakazakii).